We begin with the raw amino-acid sequence, 497 residues long: Glycerol kinase (497 aa).

T11 serves as a coordination point for ADP. Residues T11, S12, and S13 each coordinate ATP. T11 contacts sn-glycerol 3-phosphate. R15 contacts ADP. R81, E82, Y133, and D242 together coordinate sn-glycerol 3-phosphate. 5 residues coordinate glycerol: R81, E82, Y133, D242, and Q243. ADP contacts are provided by T264 and G307. T264, G307, Q311, and G412 together coordinate ATP. Residues G412 and N416 each coordinate ADP.

The protein belongs to the FGGY kinase family.

It carries out the reaction glycerol + ATP = sn-glycerol 3-phosphate + ADP + H(+). The protein operates within polyol metabolism; glycerol degradation via glycerol kinase pathway; sn-glycerol 3-phosphate from glycerol: step 1/1. Inhibited by fructose 1,6-bisphosphate (FBP). Functionally, key enzyme in the regulation of glycerol uptake and metabolism. Catalyzes the phosphorylation of glycerol to yield sn-glycerol 3-phosphate. The chain is Glycerol kinase from Polaromonas naphthalenivorans (strain CJ2).